The primary structure comprises 232 residues: Phosphoadenosine 5'-phosphosulfate reductase (232 aa).

Residue Cys228 is the Nucleophile; cysteine thiosulfonate intermediate of the active site.

It belongs to the PAPS reductase family. CysH subfamily.

It is found in the cytoplasm. It carries out the reaction [thioredoxin]-disulfide + sulfite + adenosine 3',5'-bisphosphate + 2 H(+) = [thioredoxin]-dithiol + 3'-phosphoadenylyl sulfate. Its pathway is sulfur metabolism; hydrogen sulfide biosynthesis; sulfite from sulfate: step 3/3. Functionally, catalyzes the formation of sulfite from phosphoadenosine 5'-phosphosulfate (PAPS) using thioredoxin as an electron donor. The sequence is that of Phosphoadenosine 5'-phosphosulfate reductase from Synechococcus sp. (strain ATCC 27144 / PCC 6301 / SAUG 1402/1) (Anacystis nidulans).